The following is a 625-amino-acid chain: Probable potassium transport system protein Kup 1 (625 aa).

A run of 12 helical transmembrane segments spans residues 14-34 (LSLLALSALGIVFGDIGTSPL), 50-70 (AAAVLGALSLVIWTLFIITTV), 104-124 (IVALGLFGAALIYGDGAITPA), 139-159 (PALQPYVVPAAVVILLALFAI), 170-190 (LFGPVMLLWFVTIAVLGLVGI), 213-233 (GATGFLVLGSVFLCVTGAEAL), 249-269 (WFAVVFPSLIINYAGQAALVI), 287-307 (LLLPLIGLATLATIIASQSVI), 339-359 (IYVGAVNWLLMLVTVSLTIGF), 368-388 (AYGIAVSLTMLMTSALLFIAM), 396-416 (LLAAGAVAGVFLTIDSAFFLA), and 421-441 (IAEGGYVPLLLATSVYGLMWI).

Belongs to the HAK/KUP transporter (TC 2.A.72) family.

The protein localises to the cell inner membrane. It catalyses the reaction K(+)(in) + H(+)(in) = K(+)(out) + H(+)(out). Functionally, transport of potassium into the cell. Likely operates as a K(+):H(+) symporter. This chain is Probable potassium transport system protein Kup 1, found in Bradyrhizobium sp. (strain ORS 278).